We begin with the raw amino-acid sequence, 368 residues long: RNA polymerase sigma factor SigA (368 aa).

Positions 16–90 (TLTLEDVKKQ…KLNPSDLSAP (75 aa)) are sigma-70 factor domain-1. A disordered region spans residues 69–90 (LVNEKDSSDTDEKLNPSDLSAP). Over residues 71–83 (NEKDSSDTDEKLN) the composition is skewed to basic and acidic residues. Residues 135–205 (LAEANLRLVV…TRAIADQART (71 aa)) form a sigma-70 factor domain-2 region. The Interaction with polymerase core subunit RpoC motif lies at 159–162 (DLIQ). The segment at 214–291 (ETINKLIRVQ…QEAQSPSDHA (78 aa)) is sigma-70 factor domain-3. Residues 303-356 (VLDTLTDREENVLRLRFGLDDGRTRTLEEVGKVFGVTRERIRQIEAKALRKLRH) form a sigma-70 factor domain-4 region. A DNA-binding region (H-T-H motif) is located at residues 329-348 (LEEVGKVFGVTRERIRQIEA).

Belongs to the sigma-70 factor family. RpoD/SigA subfamily. Interacts transiently with the RNA polymerase catalytic core formed by RpoA, RpoB, RpoC and RpoZ (2 alpha, 1 beta, 1 beta' and 1 omega subunit) to form the RNA polymerase holoenzyme that can initiate transcription. Interacts (via sigma-70 factor domain 4) with the phage G1 protein gp67; this inhibits rRNA synthesis. Interaction with phage G1 protein gp67 does not inhibit transcription in general, but selectively inhibits transcription from promoters that require interaction of the RNA polymerase alpha subunit with DNA sequences upstream of the -35 promoter element.

It is found in the cytoplasm. Functionally, sigma factors are initiation factors that promote the attachment of RNA polymerase to specific initiation sites and are then released. This sigma factor is the primary sigma factor during exponential growth. The chain is RNA polymerase sigma factor SigA from Staphylococcus aureus (strain NCTC 8325 / PS 47).